The following is a 101-amino-acid chain: Small ribosomal subunit protein bS18c (101 aa).

Basic residues predominate over residues 1–19 (MDKSKQPFHKTKRSFRRRL). A disordered region spans residues 1–23 (MDKSKQPFHKTKRSFRRRLPPIG).

The protein belongs to the bacterial ribosomal protein bS18 family. Part of the 30S ribosomal subunit.

The protein localises to the plastid. It localises to the chloroplast. The polypeptide is Small ribosomal subunit protein bS18c (Lemna minor (Common duckweed)).